A 339-amino-acid chain; its full sequence is MIILVDAMGGDNAPEAIVNGCLDAVSEADGFEILLIGDEGKIREILNKRSYDTSRIKIHHASEVITVEDTPTKAIKTKKDSSMVVGFKLLKEKKGDIFLSCGNSGALMTGALFILGRIKGVDRPAIGAIVPTKAGKGLIIDAGLNTVCKPVNYQQFGIMGSIYMKEMLGIENPKVGLLNIGAEVGKGNETLKQAYSLLSESNINFVGNVEGNDVALGKVDVVVCDGFTGNVLLKFYEGAGSYFYNLIKGIMLKNLKTKMAALMLKKDMKVLKKIMDADENGGAPILGVDGLVFKSHGSSNARTVKNVIIKASKFAETKALDKIRQEFVNMEVEDIEQDL.

Belongs to the PlsX family. Homodimer. Probably interacts with PlsY.

Its subcellular location is the cytoplasm. It carries out the reaction a fatty acyl-[ACP] + phosphate = an acyl phosphate + holo-[ACP]. The protein operates within lipid metabolism; phospholipid metabolism. Functionally, catalyzes the reversible formation of acyl-phosphate (acyl-PO(4)) from acyl-[acyl-carrier-protein] (acyl-ACP). This enzyme utilizes acyl-ACP as fatty acyl donor, but not acyl-CoA. The polypeptide is Phosphate acyltransferase (Acetivibrio thermocellus (strain ATCC 27405 / DSM 1237 / JCM 9322 / NBRC 103400 / NCIMB 10682 / NRRL B-4536 / VPI 7372) (Clostridium thermocellum)).